The chain runs to 232 residues: Large ribosomal subunit protein uL1 (232 aa).

It belongs to the universal ribosomal protein uL1 family. In terms of assembly, part of the 50S ribosomal subunit.

In terms of biological role, binds directly to 23S rRNA. The L1 stalk is quite mobile in the ribosome, and is involved in E site tRNA release. Protein L1 is also a translational repressor protein, it controls the translation of the L11 operon by binding to its mRNA. In Chlamydia trachomatis serovar D (strain ATCC VR-885 / DSM 19411 / UW-3/Cx), this protein is Large ribosomal subunit protein uL1.